We begin with the raw amino-acid sequence, 275 residues long: Putative protein A464R (275 aa).

The 125-residue stretch at 51–175 (KEDVEYLIGM…LMGAIYFDLG (125 aa)) folds into the RNase III domain. In terms of domain architecture, DRBM spans 201 to 269 (NYKDRLLKHT…SKIALHTMGV (69 aa)).

The protein belongs to the ribonuclease III family.

The protein is Putative protein A464R of Chlorella (PBCV-1).